Here is a 389-residue protein sequence, read N- to C-terminus: Chalcone synthase 2 (389 aa).

55–62 lines the CoA pocket; the sequence is KFQRMCDK. The active-site Acyl-thioester intermediate is the Cys-164. Residues Thr-197 and 216 to 217 contribute to the substrate site; that span reads GD. Ala-308 lines the CoA pocket.

It belongs to the thiolase-like superfamily. Chalcone/stilbene synthases family. In terms of assembly, homodimer.

The catalysed reaction is (E)-4-coumaroyl-CoA + 3 malonyl-CoA + 3 H(+) = 2',4,4',6'-tetrahydroxychalcone + 3 CO2 + 4 CoA. It participates in secondary metabolite biosynthesis; flavonoid biosynthesis. Its function is as follows. The primary product of this enzyme is 4,2',4',6'-tetrahydroxychalcone (also termed naringenin-chalcone or chalcone) which can under specific conditions spontaneously isomerize into naringenin. The sequence is that of Chalcone synthase 2 (CHS2) from Medicago sativa (Alfalfa).